Consider the following 340-residue polypeptide: Protein-arginine kinase (340 aa).

The Phosphagen kinase C-terminal domain maps to 21–242; it reads VVLSSRIRLA…EQIIMQERVA (222 aa). Residues 24–28, His79, Arg113, 164–168, and 195–200 each bind ATP; these read SSRIR, RASVM, and RGIYGE.

Belongs to the ATP:guanido phosphotransferase family.

It catalyses the reaction L-arginyl-[protein] + ATP = N(omega)-phospho-L-arginyl-[protein] + ADP + H(+). Catalyzes the specific phosphorylation of arginine residues in proteins. The chain is Protein-arginine kinase from Listeria monocytogenes serovar 1/2a (strain ATCC BAA-679 / EGD-e).